The sequence spans 815 residues: Probable beta-glucosidase G (815 aa).

Residues 1 to 20 (MASIAHLVVSGLLAATAVNG) form the signal peptide. N-linked (GlcNAc...) asparagine glycosylation is found at Asn-40, Asn-58, Asn-229, and Asn-276. Residue Asp-304 is part of the active site. Residues Asn-343, Asn-350, Asn-402, Asn-507, Asn-563, Asn-584, Asn-623, Asn-662, and Asn-715 are each glycosylated (N-linked (GlcNAc...) asparagine).

Belongs to the glycosyl hydrolase 3 family.

The protein localises to the secreted. The enzyme catalyses Hydrolysis of terminal, non-reducing beta-D-glucosyl residues with release of beta-D-glucose.. It functions in the pathway glycan metabolism; cellulose degradation. Its function is as follows. Beta-glucosidases are one of a number of cellulolytic enzymes involved in the degradation of cellulosic biomass. Catalyzes the last step releasing glucose from the inhibitory cellobiose. The sequence is that of Probable beta-glucosidase G (bglG) from Aspergillus flavus (strain ATCC 200026 / FGSC A1120 / IAM 13836 / NRRL 3357 / JCM 12722 / SRRC 167).